The sequence spans 417 residues: MFGRAPKKSDSTRYYEILGVPKDASPEDLKKAYKKAAIKNHPDKGGDPEKFKELAHAYEVLSDPEKREIYDQYGEDALKEGMGGGGGMHDPFDIFQSFFGGSPFGGVGSSRGRRQRRGEDVVHPLKVSLEDLFTGTTKKLSLSRNVICSKCTGKGSKSGASMKCSGCQGTGMKVSIRHLGPSMIQQMQHPCNECKGTGETINDKDRCPQCKGEKVVQEKKVLEVVVEKGMQHGQKITFPGEADEAPDTVTGDIVFVLQQKEHPKFKRKGEDLFYEHTLSLTEALCGFRFVLTHLDGRQLLIKSNLGEVVKPDQFKAIEDEGMPIYQRPFMKGKMYIHFTVEFPDSLNPDQVKSLEAILPPKPSMSLTYMELDECEETTLHNVNIEEEMKRKQTQAQQEAYDEDDEPAGGQRVQCAQQ.

Residues 11 to 76 (STRYYEILGV…REIYDQYGED (66 aa)) enclose the J domain. The segment at 135–219 (GTTKKLSLSR…CKGEKVVQEK (85 aa)) adopts a CR-type zinc-finger fold. CXXCXGXG motif repeat units lie at residues 148–155 (CSKCTGKG), 164–171 (CSGCQGTG), and 191–198 (CNECKGTG). The stretch at 207–214 (CPQCKGEK) is one CXXCXGXG motif; approximate repeat. Positions 384-417 (IEEEMKRKQTQAQQEAYDEDDEPAGGQRVQCAQQ) are disordered. Cysteine methyl ester is present on Cys-414. Residue Cys-414 is the site of S-farnesyl cysteine attachment. Residues 415 to 417 (AQQ) constitute a propeptide, removed in mature form.

The protein resides in the membrane. Functionally, plays a continuous role in plant development probably in the structural organization of compartments. The sequence is that of DnaJ protein homolog ANJ1 from Atriplex nummularia (Old man saltbush).